Consider the following 88-residue polypeptide: Large ribosomal subunit protein bL31B (88 aa).

Belongs to the bacterial ribosomal protein bL31 family. Type B subfamily. Part of the 50S ribosomal subunit.

The polypeptide is Large ribosomal subunit protein bL31B (Burkholderia orbicola (strain MC0-3)).